We begin with the raw amino-acid sequence, 348 residues long: UDP-N-acetylglucosamine--N-acetylmuramyl-(pentapeptide) pyrophosphoryl-undecaprenol N-acetylglucosamine transferase (348 aa).

Residues 11–13, asparagine 120, arginine 161, serine 187, and glutamine 281 each bind UDP-N-acetyl-alpha-D-glucosamine; that span reads TGG.

The protein belongs to the glycosyltransferase 28 family. MurG subfamily.

It localises to the cell inner membrane. The catalysed reaction is di-trans,octa-cis-undecaprenyl diphospho-N-acetyl-alpha-D-muramoyl-L-alanyl-D-glutamyl-meso-2,6-diaminopimeloyl-D-alanyl-D-alanine + UDP-N-acetyl-alpha-D-glucosamine = di-trans,octa-cis-undecaprenyl diphospho-[N-acetyl-alpha-D-glucosaminyl-(1-&gt;4)]-N-acetyl-alpha-D-muramoyl-L-alanyl-D-glutamyl-meso-2,6-diaminopimeloyl-D-alanyl-D-alanine + UDP + H(+). The protein operates within cell wall biogenesis; peptidoglycan biosynthesis. Functionally, cell wall formation. Catalyzes the transfer of a GlcNAc subunit on undecaprenyl-pyrophosphoryl-MurNAc-pentapeptide (lipid intermediate I) to form undecaprenyl-pyrophosphoryl-MurNAc-(pentapeptide)GlcNAc (lipid intermediate II). In Crocosphaera subtropica (strain ATCC 51142 / BH68) (Cyanothece sp. (strain ATCC 51142)), this protein is UDP-N-acetylglucosamine--N-acetylmuramyl-(pentapeptide) pyrophosphoryl-undecaprenol N-acetylglucosamine transferase.